Consider the following 164-residue polypeptide: Cell division protein SepF (164 aa).

The segment at 21 to 71 (YQQGQQPAQQQQSPVQAVPTPVPAPQQQAKRAPVTPLHKPSTTTRNAAPAE) is disordered. Residues 22-49 (QQGQQPAQQQQSPVQAVPTPVPAPQQQA) are compositionally biased toward low complexity.

It belongs to the SepF family. Homodimer. Interacts with FtsZ.

It is found in the cytoplasm. Its function is as follows. Cell division protein that is part of the divisome complex and is recruited early to the Z-ring. Probably stimulates Z-ring formation, perhaps through the cross-linking of FtsZ protofilaments. Its function overlaps with FtsA. The sequence is that of Cell division protein SepF from Clavibacter sepedonicus (Clavibacter michiganensis subsp. sepedonicus).